The following is a 214-amino-acid chain: MRRRRKKGADEKLLSYTKYVLRDDIDKLKGKWNLKFRNDNPIHVEFGTGKGKFITTLAKQNPDINYIAMELKEEVLLKAVEKADASNLNNILFLWGDVSNILDYFEAKELSRIYINFCDPWPKNRWSKRRLTHSGFLEMYNRVLEDDGEIHFKTDNEKLFEFSLNEIAANNWLLKNISLDLGNSEYENNVTTEYEDKFMSQGMRIFRCEAKKRN.

4 residues coordinate S-adenosyl-L-methionine: Glu45, Glu70, Asp97, and Asp119. The active site involves Asp119. Substrate-binding positions include Lys123, Asp155, and 192 to 195; that span reads TEYE.

This sequence belongs to the class I-like SAM-binding methyltransferase superfamily. TrmB family.

It catalyses the reaction guanosine(46) in tRNA + S-adenosyl-L-methionine = N(7)-methylguanosine(46) in tRNA + S-adenosyl-L-homocysteine. The protein operates within tRNA modification; N(7)-methylguanine-tRNA biosynthesis. Functionally, catalyzes the formation of N(7)-methylguanine at position 46 (m7G46) in tRNA. The chain is tRNA (guanine-N(7)-)-methyltransferase from Clostridioides difficile (strain 630) (Peptoclostridium difficile).